The primary structure comprises 64 residues: DGYPKQKDGCKYSCTINHKFCNSVCKSNGGDYGYCWFWGLACWCEGLPDNKMWKYETNTCGGKK.

The LCN-type CS-alpha/beta domain maps to 1 to 61 (DGYPKQKDGC…MWKYETNTCG (61 aa)). 4 disulfide bridges follow: C10/C60, C14/C35, C21/C42, and C25/C44. G61 bears the Glycine amide mark.

The protein belongs to the long (4 C-C) scorpion toxin superfamily. Sodium channel inhibitor family. Beta subfamily. Expressed by the venom gland.

Its subcellular location is the secreted. Its function is as follows. Depressant insect beta-toxins cause a transient contraction paralysis followed by a slow flaccid paralysis. They bind voltage-independently at site-4 of sodium channels (Nav) and shift the voltage of activation toward more negative potentials thereby affecting sodium channel activation and promoting spontaneous and repetitive firing. This toxin is active only on insects. The sequence is that of Insect toxin OsI1 from Orthochirus scrobiculosus (Central Asian scorpion).